Reading from the N-terminus, the 304-residue chain is CD-NTase-associated protein 6 (304 aa).

75–80 (GTGKTS) is a binding site for ATP.

Belongs to the AAA ATPase family. In terms of assembly, oligomerizes. Homohexamer. Forms a 1:1:6 CdnD:Cap7:Cap6 complex.

Regulates complex assembly in a CBASS antivirus system. CBASS (cyclic oligonucleotide-based antiphage signaling system) provides immunity against bacteriophage. The CD-NTase protein synthesizes cyclic nucleotides in response to infection; these serve as specific second messenger signals. The signals activate a diverse range of effectors, leading to bacterial cell death and thus abortive phage infection. A type III-C(AAA) CBASS system. Its function is as follows. Prevents the CdnD:Cap7:Cap8 complex (also called CdnD:HORMA2:HORMA3) from synthesizing 2',3',3'-cyclic AMP-AMP-AMP (cAAA). Binds and disassembles an active CdnD:Cap7:Cap8 complex, inhibiting the complex's ability to synthesize cyclic nucleotide second messengers. An AAA+-ATPase remodeler, in the absence of foreign threat Cap6 probably maintains the Cap7 protein in an open, inactive state. Once activated (presumably by a bacteriophage protein) Cap7 binds to and activates its cognate CD-NTase (CdnD in this bacteria) to synthesize cAAA, a cyclic nucleotide second messenger. cAAA activates the NucC endonuclease which degrades all DNA in the infected cell, causing cell death and abortive phage infection. This Pseudomonas aeruginosa protein is CD-NTase-associated protein 6.